A 243-amino-acid chain; its full sequence is Probable enoyl-CoA hydratase echA6 (243 aa).

It belongs to the enoyl-CoA hydratase/isomerase family.

It carries out the reaction a (3S)-3-hydroxyacyl-CoA = a (2E)-enoyl-CoA + H2O. The catalysed reaction is a 4-saturated-(3S)-3-hydroxyacyl-CoA = a (3E)-enoyl-CoA + H2O. Could possibly oxidize fatty acids using specific components. The protein is Probable enoyl-CoA hydratase echA6 (echA6) of Mycobacterium bovis (strain ATCC BAA-935 / AF2122/97).